A 983-amino-acid chain; its full sequence is Importin beta-like protein kap113 (983 aa).

The 73-residue stretch at 24–96 (AEGHLNNWKK…RCNALLGSIK (73 aa)) folds into the Importin N-terminal domain.

This sequence belongs to the importin beta family.

Its subcellular location is the nucleus. Functionally, functions as a component of the nuclear pore complex (NPC). NPC components, collectively referred to as nucleoporins (NUPs), can play the role of both NPC structural components and of docking or interaction partners for transiently associated nuclear transport factors. Active directional transport is assured by both, a Phe-Gly (FG) repeat affinity gradient for these transport factors across the NPC and a transport cofactor concentration gradient across the nuclear envelope. Involved in the export of mRNA from the nucleus to the cytoplasm. May play a role in mitotic spindle formation and/or function. The chain is Importin beta-like protein kap113 (kap113) from Schizosaccharomyces pombe (strain 972 / ATCC 24843) (Fission yeast).